Consider the following 462-residue polypeptide: Glycine--tRNA ligase (462 aa).

Positions 99 and 174 each coordinate substrate. ATP contacts are provided by residues 206-208 (RNE), 216-221 (FRTREF), 290-291 (EL), and 334-337 (GADR). Residue 221–225 (FEQME) coordinates substrate. 330 to 334 (EPSLG) is a binding site for substrate.

This sequence belongs to the class-II aminoacyl-tRNA synthetase family. In terms of assembly, homodimer.

The protein resides in the cytoplasm. It carries out the reaction tRNA(Gly) + glycine + ATP = glycyl-tRNA(Gly) + AMP + diphosphate. Catalyzes the attachment of glycine to tRNA(Gly). The sequence is that of Glycine--tRNA ligase from Macrococcus caseolyticus (strain JCSC5402) (Macrococcoides caseolyticum).